The chain runs to 345 residues: Uroporphyrinogen decarboxylase (345 aa).

Substrate is bound by residues 30-34 (RQAGR), D79, Y154, S209, and H322.

The protein belongs to the uroporphyrinogen decarboxylase family. In terms of assembly, homodimer.

The protein resides in the cytoplasm. The enzyme catalyses uroporphyrinogen III + 4 H(+) = coproporphyrinogen III + 4 CO2. The protein operates within porphyrin-containing compound metabolism; protoporphyrin-IX biosynthesis; coproporphyrinogen-III from 5-aminolevulinate: step 4/4. In terms of biological role, catalyzes the decarboxylation of four acetate groups of uroporphyrinogen-III to yield coproporphyrinogen-III. The protein is Uroporphyrinogen decarboxylase of Nocardioides sp. (strain ATCC BAA-499 / JS614).